The following is a 669-amino-acid chain: Glutaminase kidney isoform, mitochondrial (669 aa).

The N-terminal 54 residues, 1-54 (MMRLRGSGMLRDLLLRSPAGVSATLRRAQPLVTLCRRPRGGGRPAAGPAAAARL), are a transit peptide targeting the mitochondrion. The tract at residues 68–118 (LARGLSSSPSEILQELGKGSTHPQPGVSPPAAPAAPGPKDGPGETDAFGNS) is disordered. Pro residues predominate over residues 93 to 103 (GVSPPAAPAAP). An N6-succinyllysine mark is found at K130 and K164. S286 lines the substrate pocket. K311 bears the N6-acetyllysine mark. Residues 315–322 (GLRFNKLF) form a highly mobile activation loop region. Residues N335, E381, N388, Y414, Y466, and V484 each contribute to the substrate site. ANK repeat units lie at residues 585 to 614 (DSRTALHVAAAEGHVEVVKFLLEACKVNPF) and 619 to 648 (WNNTPMDEALHFGHHDVFKILQEYQVQYTP). Residues 647–669 (TPQGDSDNGKENQTVHKNLDGLL) form a disordered region. S652 bears the Phosphoserine mark. Basic and acidic residues predominate over residues 653–669 (DNGKENQTVHKNLDGLL).

The protein belongs to the glutaminase family. In terms of assembly, homotetramer, dimer of dimers. The tetramers can assemble into rod-like oligomers (in vitro), but the physiological significance of this is not clear. Interacts with RAF1 and MAP2K2. Interacts with ATCAY; the interaction is direct and may control GLS localization, negatively regulating its activity. In terms of processing, synthesized as a 74-kDa cytosolic precursor which is proteolytically processed by the mitochondrial-processing peptidase (MPP) via a 72-kDa intermediate to yield the mature mitochondrial 68- and 65-kDa subunits. As to expression, isoform 1 and isoform 3 are detected in brain cortex. Isoform 3 is highly expressed in astrocytoma, ganglioglioma and ependymoma. Isoform 1 is highly expressed in brain and kidney, but not detected in liver. Isoform 3 is highly expressed in heart and pancreas, detected at lower levels in placenta, lung, pancreas and kidney, but is not detected in liver. Isoform 2 is expressed in cardiac and skeletal muscle.

The protein localises to the mitochondrion. It is found in the cytoplasm. Its subcellular location is the cytosol. It localises to the mitochondrion matrix. It carries out the reaction L-glutamine + H2O = L-glutamate + NH4(+). Isoform 1 and isoform 3 are activated by phosphate. Inhibited by BPTES. BPTES binds between subunits and favors dissociation of the tetramer into dimers. Inhibited by 6-diazo-5-oxo-L-norleucine (DON). Enzyme activity is stimulated by phosphorylation. Catalyzes the first reaction in the primary pathway for the renal catabolism of glutamine. Plays a role in maintaining acid-base homeostasis. Regulates the levels of the neurotransmitter glutamate, the main excitatory neurotransmitter in the brain. Its function is as follows. Lacks catalytic activity. This chain is Glutaminase kidney isoform, mitochondrial (GLS), found in Homo sapiens (Human).